The following is a 97-amino-acid chain: Small ribosomal subunit protein uS19 (97 aa).

It belongs to the universal ribosomal protein uS19 family.

Protein S19 forms a complex with S13 that binds strongly to the 16S ribosomal RNA. The polypeptide is Small ribosomal subunit protein uS19 (Pelagibacter ubique (strain HTCC1062)).